The primary structure comprises 68 residues: Non-disulfide-bridged peptide 5.6 (68 aa).

An N-terminal signal peptide occupies residues 1–23; the sequence is MKTQVIIFIMAVVFLQLLSQSEA. Positions 37–68 are excised as a propeptide; the sequence is ELRNIDLDQFDDMFDEPEISAADMRFLQELLK.

This sequence belongs to the non-disulfide-bridged peptide (NDBP) superfamily. Short antimicrobial peptide (group 4) family. In terms of tissue distribution, expressed by the venom gland.

Its subcellular location is the secreted. The protein resides in the target cell membrane. Its function is as follows. Antibacterial peptide with activity against both Gram-positive and Gram-negative bacteria probably by forming pores in the cell membrane. Also has weak hemolytic activity. Does not show antifungal activity. The chain is Non-disulfide-bridged peptide 5.6 from Hoffmannihadrurus gertschi (Scorpion).